The sequence spans 302 residues: Sulfate adenylyltransferase subunit 2 (302 aa).

A disordered region spans residues 279 to 302 (ERQGRAIDHDSSGSMELKKRQGYF). Positions 280 to 302 (RQGRAIDHDSSGSMELKKRQGYF) are enriched in basic and acidic residues.

It belongs to the PAPS reductase family. CysD subfamily. Heterodimer composed of CysD, the smaller subunit, and CysN.

The enzyme catalyses sulfate + ATP + H(+) = adenosine 5'-phosphosulfate + diphosphate. The protein operates within sulfur metabolism; hydrogen sulfide biosynthesis; sulfite from sulfate: step 1/3. Its function is as follows. With CysN forms the ATP sulfurylase (ATPS) that catalyzes the adenylation of sulfate producing adenosine 5'-phosphosulfate (APS) and diphosphate, the first enzymatic step in sulfur assimilation pathway. APS synthesis involves the formation of a high-energy phosphoric-sulfuric acid anhydride bond driven by GTP hydrolysis by CysN coupled to ATP hydrolysis by CysD. The polypeptide is Sulfate adenylyltransferase subunit 2 (Aliivibrio fischeri (strain ATCC 700601 / ES114) (Vibrio fischeri)).